Consider the following 510-residue polypeptide: Peroxidase 2 (510 aa).

The signal sequence occupies residues 1–19; it reads MRLTYLPLFAGIAIQSASA. Residues 20 to 58 constitute a propeptide that is removed on maturation; sequence LPDFFKSSVLKPRRTNSLLINPDAQPDLPTAQQASTAAA. Aspartate 228 acts as the Proton acceptor in catalysis. Histidine 362 is a binding site for heme.

As to quaternary structure, homodimer. It depends on heme b as a cofactor.

In terms of biological role, peroxidase capable of degrading beta-carotene. This is Peroxidase 2 from Mycetinis scorodonius (Garlic mushroom).